The following is a 174-amino-acid chain: Probable inosine/xanthosine triphosphatase (174 aa).

Asp-63 is a Mg(2+) binding site.

It belongs to the YjjX NTPase family. Homodimer. Mg(2+) serves as cofactor. The cofactor is Mn(2+).

The enzyme catalyses XTP + H2O = XDP + phosphate + H(+). It catalyses the reaction ITP + H2O = IDP + phosphate + H(+). In terms of biological role, phosphatase that hydrolyzes non-canonical purine nucleotides such as XTP and ITP to their respective diphosphate derivatives. Probably excludes non-canonical purines from DNA/RNA precursor pool, thus preventing their incorporation into DNA/RNA and avoiding chromosomal lesions. The protein is Probable inosine/xanthosine triphosphatase of Methanocella arvoryzae (strain DSM 22066 / NBRC 105507 / MRE50).